The sequence spans 302 residues: Plant UBX domain-containing protein 3 (302 aa).

Disordered stretches follow at residues 1 to 64 (MSSK…PKHD) and 79 to 98 (VEGPLEHPSSSRSFTGTGRL). An SEP domain is found at 113 to 177 (PVIHNIIFWS…NLMRRDEKCP (65 aa)). Residues 224 to 301 (ETLPSTSIQL…GLASSVVIQK (78 aa)) enclose the UBX domain.

In terms of assembly, interacts with CDC48A.

This chain is Plant UBX domain-containing protein 3, found in Arabidopsis thaliana (Mouse-ear cress).